The sequence spans 80 residues: Acyl carrier protein (80 aa).

Residues 4–79 form the Carrier domain; it reads EDIFSKVKDI…DAVDFIASKA (76 aa). Ser39 is modified (O-(pantetheine 4'-phosphoryl)serine).

Belongs to the acyl carrier protein (ACP) family. In terms of processing, 4'-phosphopantetheine is transferred from CoA to a specific serine of apo-ACP by AcpS. This modification is essential for activity because fatty acids are bound in thioester linkage to the sulfhydryl of the prosthetic group.

The protein localises to the cytoplasm. It participates in lipid metabolism; fatty acid biosynthesis. In terms of biological role, carrier of the growing fatty acid chain in fatty acid biosynthesis. In Synechococcus elongatus (strain ATCC 33912 / PCC 7942 / FACHB-805) (Anacystis nidulans R2), this protein is Acyl carrier protein.